Reading from the N-terminus, the 269-residue chain is 4-hydroxy-tetrahydrodipicolinate reductase (269 aa).

NAD(+) contacts are provided by residues 11 to 16 (GASGRM) and Glu-37. Residue Arg-38 coordinates NADP(+). Residues 101 to 103 (GTT) and 125 to 128 (AGNM) contribute to the NAD(+) site. The active-site Proton donor/acceptor is the His-158. Position 159 (His-159) interacts with (S)-2,3,4,5-tetrahydrodipicolinate. Lys-162 (proton donor) is an active-site residue. Residue 168 to 169 (GT) coordinates (S)-2,3,4,5-tetrahydrodipicolinate.

Belongs to the DapB family.

Its subcellular location is the cytoplasm. It catalyses the reaction (S)-2,3,4,5-tetrahydrodipicolinate + NAD(+) + H2O = (2S,4S)-4-hydroxy-2,3,4,5-tetrahydrodipicolinate + NADH + H(+). It carries out the reaction (S)-2,3,4,5-tetrahydrodipicolinate + NADP(+) + H2O = (2S,4S)-4-hydroxy-2,3,4,5-tetrahydrodipicolinate + NADPH + H(+). It functions in the pathway amino-acid biosynthesis; L-lysine biosynthesis via DAP pathway; (S)-tetrahydrodipicolinate from L-aspartate: step 4/4. Its function is as follows. Catalyzes the conversion of 4-hydroxy-tetrahydrodipicolinate (HTPA) to tetrahydrodipicolinate. The chain is 4-hydroxy-tetrahydrodipicolinate reductase from Cereibacter sphaeroides (strain KD131 / KCTC 12085) (Rhodobacter sphaeroides).